A 601-amino-acid polypeptide reads, in one-letter code: Coronin-like protein crn1 (601 aa).

5 WD repeats span residues 79–119 (GHTA…TVME), 132–172 (GHSR…AHVS), 174–213 (KMDV…PVSV), 220–260 (AKNP…EPIG), and 266–306 (DTGS…FHYL). Disordered stretches follow at residues 361–386 (SDIY…KDAQ) and 407–540 (SATV…VEEK). Basic and acidic residues-rich tracts occupy residues 419–429 (KHNEEKVETPK), 437–453 (KPKE…EPEV), and 462–495 (KVEE…EKSF). Phosphoserine is present on residues Ser-500 and Ser-501. Basic and acidic residues predominate over residues 507 to 526 (EDVKKEPSEEKKLEVSDEAP). At Ser-553 the chain carries Phosphoserine. A coiled-coil region spans residues 556 to 600 (NLADLNKRFEGFEKRYEEELAIRDWKIAQLEDKLAKLTEAIKEKC).

The protein belongs to the WD repeat coronin family. As to quaternary structure, binds to F-actin.

In Schizosaccharomyces pombe (strain 972 / ATCC 24843) (Fission yeast), this protein is Coronin-like protein crn1 (crn1).